Here is a 225-residue protein sequence, read N- to C-terminus: Adenylate kinase (225 aa).

10–15 (GSGKGT) provides a ligand contact to ATP. The interval 30–59 (ESGAIFRENISKGTEIGKKAKEYIDRGDLV) is NMP. AMP contacts are provided by residues Ser-31, Arg-36, 57-59 (DLV), 85-88 (GFPR), and Gln-92. The segment at 126–165 (GRRLCENDNNHPNNIFIDAIKPDGDKCRVCGGALSARSDD) is LID. Arg-127 serves as a coordination point for ATP. AMP contacts are provided by Arg-162 and Arg-174. An ATP-binding site is contributed by Pro-211.

The protein belongs to the adenylate kinase family. Monomer.

It localises to the cytoplasm. It carries out the reaction AMP + ATP = 2 ADP. The protein operates within purine metabolism; AMP biosynthesis via salvage pathway; AMP from ADP: step 1/1. In terms of biological role, catalyzes the reversible transfer of the terminal phosphate group between ATP and AMP. Plays an important role in cellular energy homeostasis and in adenine nucleotide metabolism. The polypeptide is Adenylate kinase (Desulfatibacillum aliphaticivorans).